The following is a 226-amino-acid chain: Prolactin (226 aa).

The first 29 residues, 1–29 (MNSQGSDRKAVTLLLLVMSNLLFCQNAHP), serve as a signal peptide directing secretion. Residues cysteine 33 and cysteine 38 are joined by a disulfide bond. Residues serine 53 and serine 117 each carry the phosphoserine modification. Cystine bridges form between cysteine 85–cysteine 201 and cysteine 218–cysteine 226.

This sequence belongs to the somatotropin/prolactin family. As to quaternary structure, interacts with PRLR.

The protein resides in the secreted. Functionally, prolactin acts primarily on the mammary gland by promoting lactation. The protein is Prolactin (PRL) of Mesocricetus auratus (Golden hamster).